The chain runs to 533 residues: Calcium-dependent protein kinase 8 (533 aa).

Residues 1–21 (MGNCCASPGSETGSKKGKPKI) form a disordered region. A lipid anchor (N-myristoyl glycine) is attached at Gly-2. Residues 57-315 (YDLGREVGRG…AAQVLEHSWI (259 aa)) form the Protein kinase domain. ATP-binding positions include 63 to 71 (VGRGEFGIT) and Lys-86. The active-site Proton acceptor is Asp-181. Phosphoserine is present on Ser-221. Positions 321–351 (APNVSLGETVKARLKQFSVMNKLKKRALRVI) are autoinhibitory domain. EF-hand domains lie at 358-394 (EEVAGIKEAFEMMDSKKTGKINLEELKFGLHKLGQQQ), 395-430 (IPDTDLQILMEAADVDGDGTLNYGEFVAVSVHLKKM), 431-466 (ANDEHLHKAFSFFDQNQSDYIEIEELREALNDEVDT), and 467-502 (NSEEVVAAIMQDVDTDKDGRISYEEFAAMMKAGTDW). The Ca(2+) site is built by Asp-371, Thr-375, Lys-377, Glu-382, Asp-408, Asp-410, Asp-412, Thr-414, Glu-419, Asp-444, Asn-446, Ser-448, Tyr-450, Glu-455, Asp-480, Asp-482, Asp-484, and Arg-486. Ser-488 bears the Phosphoserine mark. Glu-491 is a Ca(2+) binding site. The residue at position 526 (Ser-526) is a Phosphoserine.

Belongs to the protein kinase superfamily. Ser/Thr protein kinase family. CDPK subfamily.

It is found in the cell membrane. The enzyme catalyses L-seryl-[protein] + ATP = O-phospho-L-seryl-[protein] + ADP + H(+). It catalyses the reaction L-threonyl-[protein] + ATP = O-phospho-L-threonyl-[protein] + ADP + H(+). Activated by calcium. Autophosphorylation may play an important role in the regulation of the kinase activity. In terms of biological role, may play a role in signal transduction pathways that involve calcium as a second messenger. The polypeptide is Calcium-dependent protein kinase 8 (CPK8) (Arabidopsis thaliana (Mouse-ear cress)).